A 540-amino-acid chain; its full sequence is Chaperonin GroEL 4 (540 aa).

ATP is bound by residues 29–32 (TLGP), 86–90 (DGTTT), Gly413, 477–479 (NAA), and Asp493.

Belongs to the chaperonin (HSP60) family. In terms of assembly, forms a cylinder of 14 subunits composed of two heptameric rings stacked back-to-back. Interacts with the co-chaperonin GroES.

Its subcellular location is the cytoplasm. The catalysed reaction is ATP + H2O + a folded polypeptide = ADP + phosphate + an unfolded polypeptide.. Its function is as follows. Together with its co-chaperonin GroES, plays an essential role in assisting protein folding. The GroEL-GroES system forms a nano-cage that allows encapsulation of the non-native substrate proteins and provides a physical environment optimized to promote and accelerate protein folding. The protein is Chaperonin GroEL 4 of Frankia casuarinae (strain DSM 45818 / CECT 9043 / HFP020203 / CcI3).